A 205-amino-acid polypeptide reads, in one-letter code: Large ribosomal subunit protein uL4 (205 aa).

Residues 45 to 97 form a disordered region; sequence RQGTSAVKNRSAVRGGGKKPWRQKGTGRARQGSIRAPQWRGGGTVFGPTPRSY. The segment covering 60–71 has biased composition (basic residues); that stretch reads GGKKPWRQKGTG.

The protein belongs to the universal ribosomal protein uL4 family. As to quaternary structure, part of the 50S ribosomal subunit.

In terms of biological role, one of the primary rRNA binding proteins, this protein initially binds near the 5'-end of the 23S rRNA. It is important during the early stages of 50S assembly. It makes multiple contacts with different domains of the 23S rRNA in the assembled 50S subunit and ribosome. Forms part of the polypeptide exit tunnel. This Lactobacillus johnsonii (strain CNCM I-12250 / La1 / NCC 533) protein is Large ribosomal subunit protein uL4.